Here is a 187-residue protein sequence, read N- to C-terminus: Resolvase OPG149 (187 aa).

Belongs to the RuvC family. Poxviruses-type subfamily. Requires Mg(2+) as cofactor.

Plays a role in DNA replication by cleaving viral DNA concatamers to yield unit-length viral genomes. The concatamer junctions contain inverted repeat sequences that can be extruded as cruciforms, yielding Holliday junctions that A22 protein cleaves. This chain is Resolvase OPG149 (OPG149), found in Cynomys gunnisoni (Gunnison's prairie dog).